We begin with the raw amino-acid sequence, 629 residues long: Hemocyanin G chain (629 aa).

6 residues coordinate Cu cation: histidine 171, histidine 175, histidine 202, histidine 322, histidine 326, and histidine 362. 2 N-linked (GlcNAc...) asparagine glycosylation sites follow: asparagine 447 and asparagine 506. The cysteines at positions 534 and 582 are disulfide-linked. Asparagine 615 is a glycosylation site (N-linked (GlcNAc...) asparagine).

This sequence belongs to the tyrosinase family. Hemocyanin subfamily. In terms of assembly, tarantula hemocyanin is a 24-chain polymer with seven different chains identified. As to expression, hemolymph.

The protein localises to the secreted. Its subcellular location is the extracellular space. In terms of biological role, hemocyanins are copper-containing oxygen carriers occurring freely dissolved in the hemolymph of many mollusks and arthropods. The chain is Hemocyanin G chain (HCG) from Aphonopelma sp. (American tarantula).